The primary structure comprises 345 residues: Dihydroorotate dehydrogenase (quinone) (345 aa).

FMN-binding positions include 65 to 69 and T89; that span reads AGLDK. A substrate-binding site is contributed by K69. Position 114-118 (114-118) interacts with substrate; it reads NRMGF. FMN contacts are provided by N142 and N175. Residue N175 participates in substrate binding. Residue S178 is the Nucleophile of the active site. N180 serves as a coordination point for substrate. FMN is bound by residues K220 and T248. Substrate is bound at residue 249-250; the sequence is NT. FMN contacts are provided by residues G271, G300, and 321-322; that span reads YT.

Belongs to the dihydroorotate dehydrogenase family. Type 2 subfamily. Monomer. FMN is required as a cofactor.

Its subcellular location is the cell membrane. It catalyses the reaction (S)-dihydroorotate + a quinone = orotate + a quinol. It functions in the pathway pyrimidine metabolism; UMP biosynthesis via de novo pathway; orotate from (S)-dihydroorotate (quinone route): step 1/1. Its function is as follows. Catalyzes the conversion of dihydroorotate to orotate with quinone as electron acceptor. This chain is Dihydroorotate dehydrogenase (quinone), found in Burkholderia mallei (strain NCTC 10247).